A 352-amino-acid chain; its full sequence is Enhancer of mRNA-decapping protein 1 (352 aa).

2 disordered regions span residues 1–258 (MMAH…PRNH) and 277–352 (QYPQ…SSKS). Low complexity predominate over residues 71-80 (HTSSNTSNNK). Polar residues-rich tracts occupy residues 93–104 (NFGNESSHQNGG) and 205–225 (TEPNYHVNPQVNTPPQHSVNV). Positions 289 to 309 (GGVYPMVAPQYQQQPQQHPQQ) are enriched in low complexity.

It belongs to the EDC family.

It is found in the cytoplasm. Its function is as follows. mRNA-binding protein which stimulates mRNA decapping. The sequence is that of Enhancer of mRNA-decapping protein 1 (EDC1) from Debaryomyces hansenii (strain ATCC 36239 / CBS 767 / BCRC 21394 / JCM 1990 / NBRC 0083 / IGC 2968) (Yeast).